Here is a 206-residue protein sequence, read N- to C-terminus: tRNA(Phe) 7-((3-amino-3-carboxypropyl)-4-demethylwyosine(37)-N(4))-methyltransferase 2 (206 aa).

It belongs to the TYW3 family.

The catalysed reaction is 4-demethyl-7-[(3S)-3-amino-3-carboxypropyl]wyosine(37) in tRNA(Phe) + S-adenosyl-L-methionine = 7-[(3S)-3-amino-3-carboxypropyl]wyosine(37) in tRNA(Phe) + S-adenosyl-L-homocysteine + H(+). Its function is as follows. S-adenosyl-L-methionine-dependent methyltransferase that acts as a component of the wyosine derivatives biosynthesis pathway. Probably methylates N-4 position of wybutosine-86 to produce wybutosine-72. The protein is tRNA(Phe) 7-((3-amino-3-carboxypropyl)-4-demethylwyosine(37)-N(4))-methyltransferase 2 of Pyrococcus horikoshii (strain ATCC 700860 / DSM 12428 / JCM 9974 / NBRC 100139 / OT-3).